The sequence spans 792 residues: Kinesin-associated protein 3 (792 aa).

Phosphoserine is present on serine 60. Residues 103–119 show a composition bias toward basic and acidic residues; it reads LSGKEKKEKSSKPKDPP. The segment at 103 to 124 is disordered; sequence LSGKEKKEKSSKPKDPPPFEGM. ARM repeat units lie at residues 333–373, 374–412, 494–533, 578–620, and 621–662; these read FMEN…NLSF, DTGL…HISM, DGPT…NLTI, DDSC…QMVF, and HQAT…IIAE.

Heterotrimer of KIFAP3, KIF3A and KIF3B. Interacts with RAP1GDS1/SMG GDS. Interacts with SMC3 subunit of the cohesin complex. In terms of processing, phosphorylated on tyrosine residues by SRC in vitro; this reduces the binding affinity of the protein for RAP1GDS1.

Functionally, involved in tethering the chromosomes to the spindle pole and in chromosome movement. Binds to the tail domain of the KIF3A/KIF3B heterodimer to form a heterotrimeric KIF3 complex and may regulate the membrane binding of this complex. The protein is Kinesin-associated protein 3 (KIFAP3) of Homo sapiens (Human).